The following is a 44-amino-acid chain: MENSAFFYGVFLWCLLISVTGYSIYIGFGPPSKELRDPFEEHED.

The chain crosses the membrane as a helical span at residues 6–26 (FFYGVFLWCLLISVTGYSIYI).

This sequence belongs to the PsbN family.

The protein localises to the plastid. Its subcellular location is the chloroplast thylakoid membrane. Functionally, may play a role in photosystem I and II biogenesis. This Ostreococcus tauri protein is Protein PsbN.